Reading from the N-terminus, the 274-residue chain is NH(3)-dependent NAD(+) synthetase (274 aa).

Gly-46 to Ser-53 serves as a coordination point for ATP. Asp-52 is a binding site for Mg(2+). Arg-140 lines the deamido-NAD(+) pocket. Thr-160 contributes to the ATP binding site. Glu-165 is a binding site for Mg(2+). Deamido-NAD(+) is bound by residues Lys-173 and Asp-180. Lys-189 and Thr-211 together coordinate ATP. His-260 to Lys-261 lines the deamido-NAD(+) pocket.

The protein belongs to the NAD synthetase family. Homodimer.

The enzyme catalyses deamido-NAD(+) + NH4(+) + ATP = AMP + diphosphate + NAD(+) + H(+). It participates in cofactor biosynthesis; NAD(+) biosynthesis; NAD(+) from deamido-NAD(+) (ammonia route): step 1/1. Functionally, catalyzes the ATP-dependent amidation of deamido-NAD to form NAD. Uses ammonia as a nitrogen source. The sequence is that of NH(3)-dependent NAD(+) synthetase from Listeria monocytogenes serovar 1/2a (strain ATCC BAA-679 / EGD-e).